The primary structure comprises 524 residues: Beta-glucosidase 22 (524 aa).

Residues 1–24 (MALQKFPLLGLLFLITIVVSSTIA) form the signal peptide. Residue Gln-55 coordinates a beta-D-glucoside. Asn-61 is a glycosylation site (N-linked (GlcNAc...) asparagine). Residues His-158 and 203–204 (NE) each bind a beta-D-glucoside. The active-site Proton donor is Glu-204. Cys-223 and Cys-230 are joined by a disulfide. Residues Tyr-346, Glu-418, Trp-468, 475-476 (EW), and Phe-484 contribute to the a beta-D-glucoside site. The Nucleophile role is filled by Glu-418. Asn-494 carries an N-linked (GlcNAc...) asparagine glycan. The Prevents secretion from ER motif lies at 521–524 (KDEL).

The protein belongs to the glycosyl hydrolase 1 family. As to quaternary structure, component of the PYK10 complex, at least composed of PYK10/BGLU23, BGLU21, BGLU22, JAL22, JAL23, PBP1/JAL30, PBP2/JAL31, JAL32, JAL33, JAL34, JAL35, GLL22 and GLL23. Expressed exclusively in roots.

The protein localises to the endoplasmic reticulum lumen. It carries out the reaction Hydrolysis of terminal, non-reducing beta-D-glucosyl residues with release of beta-D-glucose.. With respect to regulation, activated upon binding to PBP1 or PBP2. Its function is as follows. Beta-D-glucosidase active on scopolin &gt;&gt; esculin &gt;&gt; 4-MU-glucoside. No activity with DIMBOA-glucoside, pNP-glucoside, oNP-glucoside and sinigrin as substrates. The sequence is that of Beta-glucosidase 22 from Arabidopsis thaliana (Mouse-ear cress).